We begin with the raw amino-acid sequence, 312 residues long: Ribosomal protein L11 methyltransferase (312 aa).

Residues threonine 163, glycine 184, aspartate 206, and asparagine 248 each coordinate S-adenosyl-L-methionine.

It belongs to the methyltransferase superfamily. PrmA family.

The protein resides in the cytoplasm. It carries out the reaction L-lysyl-[protein] + 3 S-adenosyl-L-methionine = N(6),N(6),N(6)-trimethyl-L-lysyl-[protein] + 3 S-adenosyl-L-homocysteine + 3 H(+). Methylates ribosomal protein L11. The chain is Ribosomal protein L11 methyltransferase from Clostridium kluyveri (strain NBRC 12016).